Reading from the N-terminus, the 82-residue chain is uncharacterized protein (82 aa).

This is an uncharacterized protein from Orgyia pseudotsugata (Douglas-fir tussock moth).